The sequence spans 496 residues: GTPase Der (496 aa).

2 consecutive EngA-type G domains span residues Pro3–Leu166 and Ile208–Thr381. Residues Gly9–Ser16, Asp56–Ile60, Asn118–Asp121, Gly214–Ser221, Asp261–Val265, and Asn326–Asp329 each bind GTP. The KH-like domain maps to Thr382–Asp466.

Belongs to the TRAFAC class TrmE-Era-EngA-EngB-Septin-like GTPase superfamily. EngA (Der) GTPase family. In terms of assembly, associates with the 50S ribosomal subunit.

Its function is as follows. GTPase that plays an essential role in the late steps of ribosome biogenesis. In Vibrio vulnificus (strain CMCP6), this protein is GTPase Der.